Reading from the N-terminus, the 339-residue chain is MDLLNVVYIINFILLLLAAITDIKERIIPHKYTIAMIIINLVVGYYYFGFNAIIAFFSTLILCLILSIGMGGGDVKLFTALAPIFAYPNSFVFYIPKYILYLIAISMFIAAVFPMYKILMRYWKDIIPSACYLTMMLGILYYFINIYEIPYASIIIWAYIVLSIFVSRKVPKYKEYTKKLGYLFPAYLLFLYIIDTTYFIKYNVLLTSIIYLCEIILISIVIYALTGVETSDKKHIEELKEGDILRDVIIIDKDGVEVKNLNIMKRIKFLLEHEIKENEKEIILTDGEGLSNEDIRKIKKLYMEGKIPDKLNVIKTYPFVPFVVIGYVIVLMLMKLAII.

The next 10 helical transmembrane spans lie at 3 to 23 (LLNV…ITDI), 27 to 47 (IIPH…GYYY), 48 to 68 (FGFN…ILSI), 75 to 95 (VKLF…VFYI), 99 to 119 (ILYL…YKIL), 125 to 145 (DIIP…YFIN), 146 to 166 (IYEI…SIFV), 180 to 200 (LGYL…TYFI), 204 to 224 (VLLT…VIYA), and 319 to 339 (FVPF…LAII).

This sequence belongs to the peptidase A24 family.

It localises to the cell membrane. Peptidase that processes the N-terminus of prepilins. This chain is Prepilin peptidase EppA, found in Methanocaldococcus jannaschii (strain ATCC 43067 / DSM 2661 / JAL-1 / JCM 10045 / NBRC 100440) (Methanococcus jannaschii).